The following is a 273-amino-acid chain: Type IV secretion system protein PtlF homolog (273 aa).

A signal peptide spans 1 to 20 (MMAARMMAAGLAATALSAHA).

The protein belongs to the TrbG/VirB9 family.

The protein localises to the cell outer membrane. The chain is Type IV secretion system protein PtlF homolog (ptlF) from Bordetella bronchiseptica (strain ATCC BAA-588 / NCTC 13252 / RB50) (Alcaligenes bronchisepticus).